Consider the following 619-residue polypeptide: 1-deoxy-D-xylulose-5-phosphate synthase (619 aa).

Thiamine diphosphate is bound by residues histidine 74 and 115-117 (GHS). Aspartate 146 is a Mg(2+) binding site. Thiamine diphosphate is bound by residues 147 to 148 (GA), asparagine 175, tyrosine 285, and glutamate 365. Residue asparagine 175 coordinates Mg(2+).

This sequence belongs to the transketolase family. DXPS subfamily. As to quaternary structure, homodimer. Mg(2+) is required as a cofactor. The cofactor is thiamine diphosphate.

The catalysed reaction is D-glyceraldehyde 3-phosphate + pyruvate + H(+) = 1-deoxy-D-xylulose 5-phosphate + CO2. It functions in the pathway metabolic intermediate biosynthesis; 1-deoxy-D-xylulose 5-phosphate biosynthesis; 1-deoxy-D-xylulose 5-phosphate from D-glyceraldehyde 3-phosphate and pyruvate: step 1/1. In terms of biological role, catalyzes the acyloin condensation reaction between C atoms 2 and 3 of pyruvate and glyceraldehyde 3-phosphate to yield 1-deoxy-D-xylulose-5-phosphate (DXP). The polypeptide is 1-deoxy-D-xylulose-5-phosphate synthase (Clostridium acetobutylicum (strain ATCC 824 / DSM 792 / JCM 1419 / IAM 19013 / LMG 5710 / NBRC 13948 / NRRL B-527 / VKM B-1787 / 2291 / W)).